A 259-amino-acid polypeptide reads, in one-letter code: 5'-nucleotidase SurE 1 (259 aa).

A divalent metal cation contacts are provided by Asp-16, Asp-17, Ser-48, and Asn-101.

Belongs to the SurE nucleotidase family. A divalent metal cation serves as cofactor.

The protein localises to the cytoplasm. It catalyses the reaction a ribonucleoside 5'-phosphate + H2O = a ribonucleoside + phosphate. In terms of biological role, nucleotidase that shows phosphatase activity on nucleoside 5'-monophosphates. This is 5'-nucleotidase SurE 1 from Burkholderia lata (strain ATCC 17760 / DSM 23089 / LMG 22485 / NCIMB 9086 / R18194 / 383).